The primary structure comprises 687 residues: Calcium-binding protein SP84 (687 aa).

The first 19 residues, methionine 1–alanine 19, serve as a signal peptide directing secretion. EF-hand domains are found at residues leucine 152–lysine 187, leucine 257–valine 292, lysine 406–valine 441, isoleucine 476–alanine 511, and methionine 579–leucine 614. Residues aspartate 592, asparagine 594, aspartate 596, glutamate 598, and aspartate 603 each coordinate Ca(2+).

Expressed in salivary glands where expression is strongest in type III cells in the posterior lobe of the principal glands (at protein level). Not expressed in midgut, Malpighian tubules or epidermis.

It localises to the secreted. Its function is as follows. Binds calcium. During feeding of the phloem sap, protein is injected into sieve tubes of rice plants. This process may suppress the sieve-element clogging and facilitate continuous ingestion from sieve tubes. The chain is Calcium-binding protein SP84 from Nephotettix cincticeps (Green rice leafhopper).